Reading from the N-terminus, the 359-residue chain is WAT1-related protein At4g16620 (359 aa).

The next 10 membrane-spanning stretches (helical) occupy residues 5–25, 41–61, 77–97, 105–125, 143–163, 183–203, 206–226, 246–266, 279–299, and 305–325; these read ETLI…IYAG, LLIV…LAFL, IKLV…FLEG, MATA…WAAG, TVLC…TATL, ILGC…IVLQ, ILAE…MGGI, VIGL…SGGG, PVIV…VSAF, and FNLG…FVLW. Positions 30–154 constitute an EamA 1 domain; it reads LSQLLSLGID…LCVMGALIMS (125 aa). The 119-residue stretch at 206-324 folds into the EamA 2 domain; it reads ILAEFPAPIS…LMFGGLYFVL (119 aa).

It belongs to the drug/metabolite transporter (DMT) superfamily. Plant drug/metabolite exporter (P-DME) (TC 2.A.7.4) family.

The protein localises to the membrane. This is WAT1-related protein At4g16620 from Arabidopsis thaliana (Mouse-ear cress).